Consider the following 311-residue polypeptide: MGRRNNTNVPDFILTGLSDSEEVQMALFILFLLIYLITMLGNVGMILIIRLDLQLHTPMYFFLTHLSFIDLSYSTVITPKTLANLLTSNYISFMGCFAQMFFFVFLGAAECFLLSSMAYDRYVAICSPLRYPVIMSKRLCCALVTGPYVISFINSFVNVVWMSRLHFCDSNVVRHFFCDTSPILALSCMDTYDIEIMIHILAGSTLMVSLITISASYVSILSTILKINSTSGKQKALSTCASHLLGVTIFYGTMIFTYLKPRKSYSLGRDQVASVFYTIVIPMLNPLIYSLRNKEVKNALIRVMQRRQDSR.

The Extracellular segment spans residues 1-25 (MGRRNNTNVPDFILTGLSDSEEVQM). N5 carries N-linked (GlcNAc...) asparagine glycosylation. The chain crosses the membrane as a helical span at residues 26 to 46 (ALFILFLLIYLITMLGNVGMI). Topologically, residues 47–54 (LIIRLDLQ) are cytoplasmic. Residues 55 to 75 (LHTPMYFFLTHLSFIDLSYST) form a helical membrane-spanning segment. Residues 76-98 (VITPKTLANLLTSNYISFMGCFA) are Extracellular-facing. C96 and C188 are oxidised to a cystine. The helical transmembrane segment at 99–119 (QMFFFVFLGAAECFLLSSMAY) threads the bilayer. Topologically, residues 120–138 (DRYVAICSPLRYPVIMSKR) are cytoplasmic. The helical transmembrane segment at 139–159 (LCCALVTGPYVISFINSFVNV) threads the bilayer. At 160 to 196 (VWMSRLHFCDSNVVRHFFCDTSPILALSCMDTYDIEI) the chain is on the extracellular side. A helical membrane pass occupies residues 197 to 216 (MIHILAGSTLMVSLITISAS). At 217 to 236 (YVSILSTILKINSTSGKQKA) the chain is on the cytoplasmic side. The helical transmembrane segment at 237-257 (LSTCASHLLGVTIFYGTMIFT) threads the bilayer. The Extracellular portion of the chain corresponds to 258–270 (YLKPRKSYSLGRD). A helical transmembrane segment spans residues 271 to 291 (QVASVFYTIVIPMLNPLIYSL). Over 292–311 (RNKEVKNALIRVMQRRQDSR) the chain is Cytoplasmic.

It belongs to the G-protein coupled receptor 1 family.

Its subcellular location is the cell membrane. In terms of biological role, odorant receptor. In Homo sapiens (Human), this protein is Olfactory receptor 8H1 (OR8H1).